The sequence spans 168 residues: Endoribonuclease YbeY (168 aa).

Zn(2+)-binding residues include H122, H126, and H132.

This sequence belongs to the endoribonuclease YbeY family. The cofactor is Zn(2+).

It localises to the cytoplasm. Functionally, single strand-specific metallo-endoribonuclease involved in late-stage 70S ribosome quality control and in maturation of the 3' terminus of the 16S rRNA. This Brucella abortus (strain 2308) protein is Endoribonuclease YbeY.